The chain runs to 1006 residues: Unconventional myosin-Id (1006 aa).

Ala2 bears the N-acetylalanine mark. The region spanning Phe9–Ala695 is the Myosin motor domain. Residue Gly102–Thr109 coordinates ATP. The residue at position 200 (Ser200) is a Phosphoserine. Residue Tyr536 is modified to Phosphotyrosine. The actin-binding stretch occupies residues Met572–Asp594. IQ domains lie at Ile699–Lys719 and Thr721–Gln741. The region spanning Gly812–Gly1005 is the TH1 domain.

It belongs to the TRAFAC class myosin-kinesin ATPase superfamily. Myosin family. In terms of assembly, interacts (via the two IQ motifs) with calmodulin. Binds an additional calmodulin chain via a third, C-terminal region. Interacts with F-actin.

It is found in the cytoplasm. The protein resides in the perikaryon. The protein localises to the cell projection. It localises to the dendrite. Its subcellular location is the early endosome. It is found in the cell cortex. Functionally, unconventional myosin that functions as actin-based motor protein with ATPase activity. Plays a role in endosomal protein trafficking, and especially in the transfer of cargo proteins from early to recycling endosomes. Required for normal planar cell polarity in ciliated tracheal cells, for normal rotational polarity of cilia, and for coordinated, unidirectional ciliary movement in the trachea. Required for normal, polarized cilia organization in brain ependymal epithelial cells. The chain is Unconventional myosin-Id (MYO1D) from Canis lupus familiaris (Dog).